The chain runs to 127 residues: Aspartate 1-decarboxylase (127 aa).

Ser-25 (schiff-base intermediate with substrate; via pyruvic acid) is an active-site residue. Residue Ser-25 is modified to Pyruvic acid (Ser). Thr-57 contacts substrate. Tyr-58 (proton donor) is an active-site residue. Position 73-75 (73-75 (GAA)) interacts with substrate.

It belongs to the PanD family. Heterooctamer of four alpha and four beta subunits. It depends on pyruvate as a cofactor. Is synthesized initially as an inactive proenzyme, which is activated by self-cleavage at a specific serine bond to produce a beta-subunit with a hydroxyl group at its C-terminus and an alpha-subunit with a pyruvoyl group at its N-terminus.

It is found in the cytoplasm. The catalysed reaction is L-aspartate + H(+) = beta-alanine + CO2. It participates in cofactor biosynthesis; (R)-pantothenate biosynthesis; beta-alanine from L-aspartate: step 1/1. Its function is as follows. Catalyzes the pyruvoyl-dependent decarboxylation of aspartate to produce beta-alanine. The chain is Aspartate 1-decarboxylase from Staphylococcus aureus (strain MSSA476).